The following is a 321-amino-acid chain: Nod factor export ATP-binding protein I (321 aa).

The ABC transporter domain occupies 17–247 (LSVEGLRKRY…EIGCDVVEVY (231 aa)). 49–56 (GPNGAGKT) is a binding site for ATP.

Belongs to the ABC transporter superfamily. Lipooligosaccharide exporter (TC 3.A.1.102) family. As to quaternary structure, the complex is composed of two ATP-binding proteins (NodI) and two transmembrane proteins (NodJ).

The protein resides in the cell inner membrane. Its function is as follows. Part of the ABC transporter complex NodIJ involved in the export of the nodulation factors (Nod factors), the bacterial signal molecules that induce symbiosis and subsequent nodulation induction. Nod factors are LCO (lipo-chitin oligosaccharide), a modified beta-1,4-linked N-acetylglucosamine oligosaccharide. This subunit is responsible for energy coupling to the transport system. This Ralstonia nicotianae (strain ATCC BAA-1114 / GMI1000) (Ralstonia solanacearum) protein is Nod factor export ATP-binding protein I.